The chain runs to 714 residues: Fatty acid oxidation complex subunit alpha (714 aa).

An enoyl-CoA hydratase region spans residues 1 to 190 (MEMASAFTLN…KLGLVDDVVP (190 aa)). Residues 306–714 (APLNSVGILG…FWKTTATDLQ (409 aa)) form a 3-hydroxyacyl-CoA dehydrogenase region.

This sequence in the N-terminal section; belongs to the enoyl-CoA hydratase/isomerase family. The protein in the central section; belongs to the 3-hydroxyacyl-CoA dehydrogenase family. As to quaternary structure, heterotetramer of two alpha chains (FadJ) and two beta chains (FadI).

The protein localises to the cytoplasm. It catalyses the reaction a (3S)-3-hydroxyacyl-CoA = a (2E)-enoyl-CoA + H2O. The catalysed reaction is a 4-saturated-(3S)-3-hydroxyacyl-CoA = a (3E)-enoyl-CoA + H2O. The enzyme catalyses a (3S)-3-hydroxyacyl-CoA + NAD(+) = a 3-oxoacyl-CoA + NADH + H(+). It carries out the reaction (3S)-3-hydroxybutanoyl-CoA = (3R)-3-hydroxybutanoyl-CoA. Its pathway is lipid metabolism; fatty acid beta-oxidation. Catalyzes the formation of a hydroxyacyl-CoA by addition of water on enoyl-CoA. Also exhibits 3-hydroxyacyl-CoA epimerase and 3-hydroxyacyl-CoA dehydrogenase activities. This chain is Fatty acid oxidation complex subunit alpha, found in Escherichia coli O17:K52:H18 (strain UMN026 / ExPEC).